The primary structure comprises 1432 residues: ABC transporter asL7 (1432 aa).

A compositionally biased stretch (polar residues) spans 1-20 (MFDTTKLQSSTQDGSTSSVT). Residues 1-36 (MFDTTKLQSSTQDGSTSSVTGEPIFGANDPNSELNP) form a disordered region. One can recognise an ABC transporter 1 domain in the interval 91-341 (LALPGMLIRN…FERLGFECPS (251 aa)). Asn-265 carries an N-linked (GlcNAc...) asparagine glycan. The next 6 helical transmembrane spans lie at 450–470 (PTIV…SLFF), 484–504 (VVLF…VMTL), 530–550 (VLMD…VFYF), 559–579 (GNFF…SGIF), 597–617 (MIPA…MVPI), and 702–722 (IGIV…TSEY). Residues 786-1029 (FHWRNVCYDI…TLVEYFERKA (244 aa)) form the ABC transporter 2 domain. 822–829 (GVSGAGKT) is a binding site for ATP. An N-linked (GlcNAc...) asparagine glycan is attached at Asn-1017. Residues 1076–1095 (LSRLREHGSQSNSHDSEKSE) are disordered. Transmembrane regions (helical) follow at residues 1135–1155 (FALC…SPLS), 1166–1186 (VFQL…QFII), 1215–1235 (IPYY…PIGL), 1251–1271 (LMWL…HFCI), 1279–1299 (AGAN…GALI), and 1317–1337 (LSYL…VTCA). Asn-1371 is a glycosylation site (N-linked (GlcNAc...) asparagine). The helical transmembrane segment at 1402-1422 (FGIIWVYVIFNISAAITLYWV) threads the bilayer.

This sequence belongs to the ABC transporter superfamily. ABCG family. PDR (TC 3.A.1.205) subfamily.

Its subcellular location is the cell membrane. In terms of biological role, ABC transporter; part of the gene cluster that mediates the biosynthesis of xenovulene A, an unusual meroterpenoid that has potent inhibitory effects on the human gamma-aminobutyrate A (GABAA) benzodiazepine receptor. This Sarocladium schorii (Acremonium strictum (strain IMI 501407)) protein is ABC transporter asL7.